Reading from the N-terminus, the 393-residue chain is Methylthioribose kinase (393 aa).

ATP contacts are provided by residues N38, K53, and 107–109 (EDL). D225 lines the substrate pocket. 242 to 244 (DPE) lines the ATP pocket. Substrate is bound at residue R332.

The protein belongs to the methylthioribose kinase family. In terms of assembly, homodimer.

The enzyme catalyses 5-(methylsulfanyl)-D-ribose + ATP = 5-(methylsulfanyl)-alpha-D-ribose 1-phosphate + ADP + H(+). It participates in amino-acid biosynthesis; L-methionine biosynthesis via salvage pathway; S-methyl-5-thio-alpha-D-ribose 1-phosphate from S-methyl-5'-thioadenosine (hydrolase route): step 2/2. Catalyzes the phosphorylation of methylthioribose into methylthioribose-1-phosphate. The chain is Methylthioribose kinase from Bacillus cereus (strain ATCC 10987 / NRS 248).